Reading from the N-terminus, the 328-residue chain is Lipoyl synthase (328 aa).

Residues Cys-56, Cys-61, Cys-67, Cys-82, Cys-86, Cys-89, and Ser-298 each contribute to the [4Fe-4S] cluster site. Residues Trp-68 to Ser-287 enclose the Radical SAM core domain.

Belongs to the radical SAM superfamily. Lipoyl synthase family. [4Fe-4S] cluster is required as a cofactor.

It localises to the cytoplasm. It carries out the reaction [[Fe-S] cluster scaffold protein carrying a second [4Fe-4S](2+) cluster] + N(6)-octanoyl-L-lysyl-[protein] + 2 oxidized [2Fe-2S]-[ferredoxin] + 2 S-adenosyl-L-methionine + 4 H(+) = [[Fe-S] cluster scaffold protein] + N(6)-[(R)-dihydrolipoyl]-L-lysyl-[protein] + 4 Fe(3+) + 2 hydrogen sulfide + 2 5'-deoxyadenosine + 2 L-methionine + 2 reduced [2Fe-2S]-[ferredoxin]. It participates in protein modification; protein lipoylation via endogenous pathway; protein N(6)-(lipoyl)lysine from octanoyl-[acyl-carrier-protein]: step 2/2. Its function is as follows. Catalyzes the radical-mediated insertion of two sulfur atoms into the C-6 and C-8 positions of the octanoyl moiety bound to the lipoyl domains of lipoate-dependent enzymes, thereby converting the octanoylated domains into lipoylated derivatives. This Streptomyces avermitilis (strain ATCC 31267 / DSM 46492 / JCM 5070 / NBRC 14893 / NCIMB 12804 / NRRL 8165 / MA-4680) protein is Lipoyl synthase.